Consider the following 201-residue polypeptide: Small ribosomal subunit protein uS4 (201 aa).

One can recognise an S4 RNA-binding domain in the interval 103-167 (RRLQTIVTKK…SKIPQVLEKT (65 aa)). A disordered region spans residues 163-201 (VLEKTKSEAPAEETVEAPAEETVEAPAEEKKEESPSTES). Acidic residues predominate over residues 172–185 (PAEETVEAPAEETV). The span at 189–201 (AEEKKEESPSTES) shows a compositional bias: basic and acidic residues.

This sequence belongs to the universal ribosomal protein uS4 family. In terms of assembly, part of the 30S ribosomal subunit. Contacts protein S5. The interaction surface between S4 and S5 is involved in control of translational fidelity.

Functionally, one of the primary rRNA binding proteins, it binds directly to 16S rRNA where it nucleates assembly of the body of the 30S subunit. With S5 and S12 plays an important role in translational accuracy. The polypeptide is Small ribosomal subunit protein uS4 (Nitrosopumilus maritimus (strain SCM1)).